The chain runs to 344 residues: uncharacterized protein (344 aa).

Positions 95–344 (TINPEDANED…TPAKKNSKGR (250 aa)) are disordered. Basic and acidic residues predominate over residues 103-123 (EDAKVKNSLKLEKEEGSDEKS). A compositionally biased stretch (acidic residues) spans 135-155 (SDDESDNSNDSEESEAEDSDQ). Positions 191–200 (SAKNAKASKP) are enriched in low complexity. A compositionally biased stretch (acidic residues) spans 244-259 (SEDEDSGSDNSEEESE). Residues 265–276 (ASSKKPPSKSSK) show a composition bias toward basic residues. Residues 281–314 (EDEDEDSGQSESEHSEEESNSDEDSGQSEEESEE) are compositionally biased toward acidic residues. Basic residues predominate over residues 331 to 344 (TAKKTPAKKNSKGR).

This is an uncharacterized protein from Acanthamoeba polyphaga (Amoeba).